A 328-amino-acid polypeptide reads, in one-letter code: Dof zinc finger protein PBF (328 aa).

Residues 33–56 (RDPKQTRAMPQIGGSGERKPRPQL) form a disordered region. The Dof-type zinc finger occupies 60-114 (LKCPRCDSNNTKFCYYNNYSMSQPRYFCKACRRYWTHGGTLRNVPIGGGCRKNKH). Cys62, Cys65, Cys87, and Cys90 together coordinate Zn(2+). Disordered stretches follow at residues 124–144 (TSSSSSATYAPLSPSTNASSS) and 306–328 (WNKHNNNNNNNNNNNNNNNNKGQ).

As to quaternary structure, interacts with the bZIP transcription factor Opaque-2/O2. Seed endosperm.

The protein localises to the nucleus. Functionally, transcription factor that binds specifically to a 5'-AA[AG]G-3' consensus core sequence. May enhance the DNA binding of the bZIP transcription factor Opaque-2 to O2 binding site elements. The protein is Dof zinc finger protein PBF (PBF) of Zea mays (Maize).